A 295-amino-acid polypeptide reads, in one-letter code: Ribosomal protein L11 methyltransferase (295 aa).

4 residues coordinate S-adenosyl-L-methionine: threonine 146, glycine 167, aspartate 189, and asparagine 231.

Belongs to the methyltransferase superfamily. PrmA family.

Its subcellular location is the cytoplasm. The catalysed reaction is L-lysyl-[protein] + 3 S-adenosyl-L-methionine = N(6),N(6),N(6)-trimethyl-L-lysyl-[protein] + 3 S-adenosyl-L-homocysteine + 3 H(+). Methylates ribosomal protein L11. The chain is Ribosomal protein L11 methyltransferase from Vibrio vulnificus (strain CMCP6).